We begin with the raw amino-acid sequence, 104 residues long: Small ribosomal subunit protein bS18 (104 aa).

The span at 1 to 14 shows a compositional bias: basic and acidic residues; it reads MMNNEHDNFQKEVE. Residues 1-25 are disordered; sequence MMNNEHDNFQKEVETTTETTFNREE.

This sequence belongs to the bacterial ribosomal protein bS18 family. In terms of assembly, part of the 30S ribosomal subunit. Forms a tight heterodimer with protein bS6.

Binds as a heterodimer with protein bS6 to the central domain of the 16S rRNA, where it helps stabilize the platform of the 30S subunit. The protein is Small ribosomal subunit protein bS18 of Mycoplasma pneumoniae (strain ATCC 29342 / M129 / Subtype 1) (Mycoplasmoides pneumoniae).